The chain runs to 458 residues: MNKFAIVLAAGKGTRMKSALPKVLHQVAGKSMLAHVLKSVSEVEIAKNVVIVGHEADRVIATLPKGTQFVKQVEQLGTGHAVRIAADLLANEEGATLVIAGDTPLITGETLGALFDYHFAQKATATILTAIAPNPTGYGRIIRDEKDSVEKIVEQKDANAFEKSITEINTGTYIFDNKSLFKALTEITTDNAQGEYYLTDVIEIFKKVGQTIAAHILDDFDESLGVNDRVALSQAEATMRKRINHEHMVNGVTLIDPATTYIDSEVTIGAETVIEANVTIKGNTFIGKNVLITNGSRIENSEIHSNCEVRNSTVEESRMSVGSNVGPYAHLRPGTVLSEEVHVGNFVEIKGSTLGKGTKAGHLTYIGNATVGEKVNFGAGTITANFDGKNKFNTEIDDFAFIGSNSTIIAPLHIGKNALTAAGSVVTEDVPDEAVEIGRGKQVNKLGRAKKMPHYRGQ.

The interval 1 to 229 (MNKFAIVLAA…FDESLGVNDR (229 aa)) is pyrophosphorylase. UDP-N-acetyl-alpha-D-glucosamine is bound by residues 8 to 11 (LAAG), Lys-22, Gln-72, and 77 to 78 (GT). Asp-102 is a binding site for Mg(2+). UDP-N-acetyl-alpha-D-glucosamine is bound by residues Gly-139, Glu-154, Asn-169, and Asn-227. Residue Asn-227 participates in Mg(2+) binding. Residues 230-250 (VALSQAEATMRKRINHEHMVN) form a linker region. The tract at residues 251–458 (GVTLIDPATT…AKKMPHYRGQ (208 aa)) is N-acetyltransferase. Positions 332 and 350 each coordinate UDP-N-acetyl-alpha-D-glucosamine. His-362 (proton acceptor) is an active-site residue. UDP-N-acetyl-alpha-D-glucosamine-binding residues include Tyr-365 and Asn-376. Residues Ala-379, Ser-404, Ala-422, and Arg-439 each contribute to the acetyl-CoA site.

In the N-terminal section; belongs to the N-acetylglucosamine-1-phosphate uridyltransferase family. This sequence in the C-terminal section; belongs to the transferase hexapeptide repeat family. Homotrimer. It depends on Mg(2+) as a cofactor.

The protein localises to the cytoplasm. It carries out the reaction alpha-D-glucosamine 1-phosphate + acetyl-CoA = N-acetyl-alpha-D-glucosamine 1-phosphate + CoA + H(+). The catalysed reaction is N-acetyl-alpha-D-glucosamine 1-phosphate + UTP + H(+) = UDP-N-acetyl-alpha-D-glucosamine + diphosphate. The protein operates within nucleotide-sugar biosynthesis; UDP-N-acetyl-alpha-D-glucosamine biosynthesis; N-acetyl-alpha-D-glucosamine 1-phosphate from alpha-D-glucosamine 6-phosphate (route II): step 2/2. It participates in nucleotide-sugar biosynthesis; UDP-N-acetyl-alpha-D-glucosamine biosynthesis; UDP-N-acetyl-alpha-D-glucosamine from N-acetyl-alpha-D-glucosamine 1-phosphate: step 1/1. Its pathway is bacterial outer membrane biogenesis; LPS lipid A biosynthesis. Functionally, catalyzes the last two sequential reactions in the de novo biosynthetic pathway for UDP-N-acetylglucosamine (UDP-GlcNAc). The C-terminal domain catalyzes the transfer of acetyl group from acetyl coenzyme A to glucosamine-1-phosphate (GlcN-1-P) to produce N-acetylglucosamine-1-phosphate (GlcNAc-1-P), which is converted into UDP-GlcNAc by the transfer of uridine 5-monophosphate (from uridine 5-triphosphate), a reaction catalyzed by the N-terminal domain. This is Bifunctional protein GlmU from Lactococcus lactis subsp. cremoris (strain MG1363).